A 753-amino-acid chain; its full sequence is Probable TonB-dependent siderophore receptor PiuA (753 aa).

The first 35 residues, 1 to 35 (MSRQSTDTAVSSQRLLASAIGVAITAIAAPQAAQA), serve as a signal peptide directing secretion. Positions 79–185 (PLLDTPKTVT…TGGSLNLISK (107 aa)) constitute a TBDR plug domain. The 564-residue stretch at 190–753 (DNFTDAGFTW…TALLGVNFHF (564 aa)) folds into the TBDR beta-barrel domain. Cysteines 420 and 430 form a disulfide.

It belongs to the TonB-dependent receptor family.

It is found in the cell outer membrane. Its function is as follows. Involved in the initial step of iron uptake by binding iron chelating siderophores, thereby allowing extraction of iron from the environment. Probably involved in the transport of siderophores, including host catecholamines such as dopamine. This is Probable TonB-dependent siderophore receptor PiuA from Pseudomonas aeruginosa (strain ATCC 15692 / DSM 22644 / CIP 104116 / JCM 14847 / LMG 12228 / 1C / PRS 101 / PAO1).